The sequence spans 589 residues: Vesicular glutamate transporter 3 (589 aa).

Residues 1-76 (MPFKAFDTFK…CHCCGLPKRY (76 aa)) lie on the Cytoplasmic side of the membrane. Positions 40–49 (TEEEDNIELN) are enriched in acidic residues. Positions 40–61 (TEEEDNIELNEEGRPVQTSRPS) are disordered. A helical transmembrane segment spans residues 77-97 (IIAIMSGLGFCISFGIRCNLG). The Vesicular segment spans residues 98–130 (VAIVEMVNNSTVYVDGKPEIQTAQFNWDPETVG). Asparagine 106 carries N-linked (GlcNAc...) asparagine glycosylation. The chain crosses the membrane as a helical span at residues 131–151 (LIHGSFFWGYIMTQIPGGFIS). Residues 152–153 (NK) lie on the Cytoplasmic side of the membrane. The chain crosses the membrane as a helical span at residues 154–174 (FAANRVFGAAIFLTSTLNMFI). Residues 175 to 182 (PSAARVHY) lie on the Vesicular side of the membrane. A helical membrane pass occupies residues 183–203 (GCVMCVRILQGLVEGVTYPAC). Residues 204-221 (HGMWSKWAPPLERSRLAT) are Cytoplasmic-facing. A helical transmembrane segment spans residues 222-242 (TSFCGSYAGAVVAMPLAGVLV). Topologically, residues 243-249 (QYIGWSS) are vesicular. Residues 250–270 (VFYIYGMFGIIWYMFWLLQAY) form a helical membrane-spanning segment. At 271-314 (ECPAAHPTISNEEKTYIETSIGEGANVVSLSKFSTPWKRFFTSL) the chain is on the cytoplasmic side. Residues 315–335 (PVYAIIVANFCRSWTFYLLLI) form a helical membrane-spanning segment. The Vesicular segment spans residues 336-353 (SQPAYFEEVFGFAISKVG). The helical transmembrane segment at 354 to 374 (LLSAVPHMVMTIVVPIGGQLA) threads the bilayer. The Cytoplasmic segment spans residues 375 to 390 (DYLRSRQILTTTAVRK). Residues 391 to 411 (IMNCGGFGMEATLLLVVGFSH) traverse the membrane as a helical segment. Topologically, residues 412 to 413 (TK) are vesicular. The helical transmembrane segment at 414-434 (GVAISFLVLAVGFSGFAISGF) threads the bilayer. Residues 435–447 (NVNHLDIAPRYAS) lie on the Cytoplasmic side of the membrane. A helical transmembrane segment spans residues 448 to 468 (ILMGISNGVGTLSGMVCPLIV). The Vesicular portion of the chain corresponds to 469 to 481 (GAMTRHKTREEWQ). A helical membrane pass occupies residues 482–502 (NVFLIAALVHYSGVIFYGVFA). The Cytoplasmic portion of the chain corresponds to 503–586 (SGEKQEWADP…SYQNEERNFS (84 aa)). Positions 559–589 (KKEWKGQRGATLDEEELTSYQNEERNFSTIS) are disordered. A compositionally biased stretch (basic and acidic residues) spans 580–589 (NEERNFSTIS).

It belongs to the major facilitator superfamily. Sodium/anion cotransporter family. VGLUT subfamily. Expressed in amygdala, cerebellum, hippocampus, medulla, spinal cord and thalamus.

The protein resides in the cytoplasmic vesicle. Its subcellular location is the secretory vesicle. It localises to the synaptic vesicle membrane. It is found in the cell membrane. The protein localises to the synapse. The protein resides in the synaptosome. It catalyses the reaction L-glutamate(out) = L-glutamate(in). It carries out the reaction 3 Na(+)(out) + phosphate(out) = 3 Na(+)(in) + phosphate(in). The enzyme catalyses chloride(in) = chloride(out). With respect to regulation, the L-glutamate uniporter activity exhibits a biphasic dependence on chloride concentration. Chloride channel activity is allosterically activated by lumenal H(+) and Cl(-) leading to synaptic vesicles acidification. The glutamate transport activity is allosterically activated by lumenal H(+) and Cl(-), preventing non-vesicular L-glutamate release. In terms of biological role, multifunctional transporter that transports L-glutamate as well as multiple ions such as chloride, sodium and phosphate. At the synaptic vesicle membrane, mainly functions as an uniporter that mediates the uptake of L-glutamate into synaptic vesicles at presynaptic nerve terminals of excitatory neural cells. The L-glutamate uniporter activity is electrogenic and is driven by the proton electrochemical gradient, mainly by the electrical gradient established by the vacuolar H(+)-ATPase across the synaptic vesicle membrane. In addition, functions as a chloride channel that allows a chloride permeation through the synaptic vesicle membrane that affects the proton electrochemical gradient and promotes synaptic vesicles acidification. At the plasma membrane, following exocytosis, functions as a symporter of Na(+) and phosphate from the extracellular space to the cytoplasm allowing synaptic phosphate homeostasis regulation. The symporter activity is electrogenic. Moreover, operates synergistically with SLC18A3/VACHT under a constant H(+) gradient, thereby allowing striatal vesicular acetylcholine uptake. This is Vesicular glutamate transporter 3 from Homo sapiens (Human).